We begin with the raw amino-acid sequence, 365 residues long: Cobalt-precorrin-5B C(1)-methyltransferase (365 aa).

It belongs to the CbiD family.

The enzyme catalyses Co-precorrin-5B + S-adenosyl-L-methionine = Co-precorrin-6A + S-adenosyl-L-homocysteine. It participates in cofactor biosynthesis; adenosylcobalamin biosynthesis; cob(II)yrinate a,c-diamide from sirohydrochlorin (anaerobic route): step 6/10. In terms of biological role, catalyzes the methylation of C-1 in cobalt-precorrin-5B to form cobalt-precorrin-6A. This chain is Cobalt-precorrin-5B C(1)-methyltransferase, found in Methanococcus maripaludis (strain C6 / ATCC BAA-1332).